The primary structure comprises 247 residues: Mast cell protease 2 (247 aa).

The signal sequence occupies residues Met1–Ala18. Residues Glu19 to Glu20 constitute a propeptide, activation peptide. In terms of domain architecture, Peptidase S1 spans Ile21–Asn244. Cys50 and Cys66 are disulfide-bonded. Residues His65 and Asp109 each act as charge relay system in the active site. Disulfide bonds link Cys143–Cys208 and Cys174–Cys187. The Charge relay system role is filled by Ser202.

The protein belongs to the peptidase S1 family. Granzyme subfamily.

Its function is as follows. This enzyme, isolated from small intestine, specifically inactivates the apo forms of a certain group of intracellular pyridoxal phosphate-requiring enzymes. It has chymotrypsin-like specificity towards small substrates. The chain is Mast cell protease 2 (Mcpt2) from Rattus norvegicus (Rat).